Consider the following 1578-residue polypeptide: FH1/FH2 domain-containing protein 3 (1578 aa).

Positions 18 to 405 (NSTNFPEPSR…DLCEKDEEEE (388 aa)) constitute a GBD/FH3 domain. Disordered stretches follow at residues 324-518 (HEDG…DKLP), 535-824 (SPLL…GVNG), 915-942 (VGRG…KTES), 979-1013 (LGHR…VPPP), 1418-1462 (QQKQ…YAED), 1490-1514 (RTRS…PSVT), and 1528-1565 (SATQ…PEEA). Phosphoserine is present on residues serine 345 and serine 376. The span at 368–383 (IQNIKSPLSAPTSPCS) shows a compositional bias: polar residues. A compositionally biased stretch (acidic residues) spans 399 to 425 (EKDEEEEEEEEQPITEPNSEEEREDDA). Threonine 413 is modified (phosphothreonine). The span at 434–446 (ASSASGQSSPGKD) shows a compositional bias: low complexity. A compositionally biased stretch (polar residues) spans 453 to 473 (ALHTTSSPTSQGRWLSASTAA). Over residues 553-583 (SNFSSNSFQSSRPSPGPSGSPSYASSFSSPQ) the composition is skewed to low complexity. Residues 584–598 (DTRSSPSGLLTSSFR) are compositionally biased toward polar residues. Residues 597–645 (FRQHQESLAAERERRRQEREERLQRIEREERNKFNREYLDKREEQRQAR) are a coiled coil. Over residues 599–651 (QHQESLAAERERRRQEREERLQRIEREERNKFNREYLDKREEQRQARGERYKY) the composition is skewed to basic and acidic residues. 2 stretches are compositionally biased toward low complexity: residues 675-684 (DLSLDLSLPA) and 692-701 (SSQSPSADSQ). The span at 751–761 (SQEEPVLELEP) shows a compositional bias: acidic residues. The segment covering 762 to 782 (EERASLSEKERQNEEVNERDN) has biased composition (basic and acidic residues). Residues 784 to 793 (SASSISSSSS) are compositionally biased toward low complexity. Basic and acidic residues predominate over residues 795 to 809 (LEREEKEDKLSEDRA). Serine 921 is subject to Phosphoserine. Position 933 is a phosphothreonine (threonine 933). Over residues 985 to 1013 (PGPPPPPPPTFLGLPPPPPPPLLDSVPPP) the composition is skewed to pro residues. Residues 985 to 1016 (PGPPPPPPPTFLGLPPPPPPPLLDSVPPPPVP) enclose the FH1 domain. Residues 1039–1435 (GQPAFTKKKK…HRERNKTRGK (397 aa)) enclose the FH2 domain. Positions 1420–1434 (KQKRANHRERNKTRG) are enriched in basic residues. Positions 1444–1456 (SGSSPAAPSQPQG) are enriched in low complexity. The DAD domain maps to 1515 to 1547 (DDAADEIMDRIVKSATQVPSQRVVPRERKRSRA). Residues 1541-1556 (ERKRSRANRKSLRRTL) show a composition bias toward basic residues.

It belongs to the formin homology family. As to quaternary structure, interacts with nestin/NES-based interfilament (IF). Interacts with SQSTM1. In terms of tissue distribution, expressed in the heart, including left ventricle, kidney, brain and skeletal muscle, including soleus and tibialis anterior (at protein level).

It is found in the cytoplasm. It localises to the cytoskeleton. The protein localises to the myofibril. The protein resides in the sarcomere. Its subcellular location is the z line. Its function is as follows. May play a role in actin filament polymerization in cardiomyocytes. Actin-organizing protein that may cause stress fiber formation together with cell elongation. In Mus musculus (Mouse), this protein is FH1/FH2 domain-containing protein 3 (Fhod3).